Reading from the N-terminus, the 27-residue chain is Ferric reductase B (27 aa).

Homodimer. FAD is required as a cofactor.

It catalyses the reaction 2 a Fe(II)-siderophore + NAD(+) + H(+) = 2 a Fe(III)-siderophore + NADH. Functionally, reductase activity that acts on Fe(3+)-chelates and uses both NADH and NADPH as electron donors. May play a role in iron uptake. This chain is Ferric reductase B (ferB), found in Paracoccus denitrificans.